Here is a 158-residue protein sequence, read N- to C-terminus: NADH-quinone oxidoreductase subunit B (158 aa).

[4Fe-4S] cluster is bound by residues cysteine 37, cysteine 38, cysteine 102, and cysteine 132.

This sequence belongs to the complex I 20 kDa subunit family. NDH-1 is composed of 14 different subunits. Subunits NuoB, C, D, E, F, and G constitute the peripheral sector of the complex. Requires [4Fe-4S] cluster as cofactor.

The protein localises to the cell inner membrane. It catalyses the reaction a quinone + NADH + 5 H(+)(in) = a quinol + NAD(+) + 4 H(+)(out). In terms of biological role, NDH-1 shuttles electrons from NADH, via FMN and iron-sulfur (Fe-S) centers, to quinones in the respiratory chain. Couples the redox reaction to proton translocation (for every two electrons transferred, four hydrogen ions are translocated across the cytoplasmic membrane), and thus conserves the redox energy in a proton gradient. The chain is NADH-quinone oxidoreductase subunit B from Alkalilimnicola ehrlichii (strain ATCC BAA-1101 / DSM 17681 / MLHE-1).